A 932-amino-acid polypeptide reads, in one-letter code: Protocadherin gamma-A7 (932 aa).

The N-terminal stretch at 1 to 28 (MAAQPRGGDYRGFFLLSILLGTPWEAWA) is a signal peptide. Cadherin domains are found at residues 29 to 133 (GRIL…VPRF), 134 to 242 (LTEE…TPVF), 243 to 347 (SLPQ…APEV), 348 to 452 (TMTS…PPTF), 453 to 562 (PHSS…PPEI), and 570 to 682 (DGST…EPSD). Over 29-692 (GRILYSVSEE…GPYNYDLTLY (664 aa)) the chain is Extracellular. N-linked (GlcNAc...) asparagine glycosylation is found at Asn-419 and Asn-545. Residues 693–713 (LVVAVATVSCVFLAFVLVLLA) form a helical membrane-spanning segment. Residues 714-932 (LRLRRWHKSR…KKKSGKKEKK (219 aa)) are Cytoplasmic-facing. Disordered stretches follow at residues 805 to 841 (PSIQ…WPNN) and 902 to 932 (ATLT…KEKK). Over residues 922-932 (NKKKSGKKEKK) the composition is skewed to basic residues.

It is found in the cell membrane. In terms of biological role, potential calcium-dependent cell-adhesion protein. May be involved in the establishment and maintenance of specific neuronal connections in the brain. This chain is Protocadherin gamma-A7 (PCDHGA7), found in Homo sapiens (Human).